A 278-amino-acid chain; its full sequence is Thioredoxin-related transmembrane protein 1 (278 aa).

A signal peptide spans 1-26 (MAPSGSLRIPVAVLLLLLWGAPWAHG). The region spanning 27-132 (KRSDVRIITD…FINFISDKEW (106 aa)) is the Thioredoxin domain. Residues 27 to 180 (KRSDVRIITD…EDLGLPIWGS (154 aa)) lie on the Extracellular side of the membrane. Residues C56 and C59 each act as nucleophile in the active site. A disulfide bridge links C56 with C59. Residues 181–203 (YTVFALATLLSGLLLGLFMIFVA) form a helical membrane-spanning segment. Over 204 to 278 (DCLCPSKRRR…VGPSLATDKS (75 aa)) the chain is Cytoplasmic. S-palmitoyl cysteine attachment occurs at residues C205 and C207. A disordered region spans residues 213 to 278 (RPQPYPSRKL…VGPSLATDKS (66 aa)). 5 positions are modified to phosphoserine: S226, S245, S268, S272, and S278. A compositionally biased stretch (acidic residues) spans 235-250 (EEQEADVEDVSEEESE).

Interacts with ATP2A2. Palmitoylated; palmitoylation is required for localization to mitochondria-associated endoplasmic reticulum membrane (MAM).

It is found in the endoplasmic reticulum membrane. It localises to the mitochondrion membrane. The protein resides in the secreted. It catalyses the reaction Catalyzes the rearrangement of -S-S- bonds in proteins.. In terms of biological role, thiredoxin domain-containing protein that participates in various redox reactions through the reversible oxidation of its active center dithiol to a disulfide and catalyze dithiol-disulfide exchange reactions. Acts as a key inhibitor of the alternative triglyceride biosynthesis pathway by inhibiting the activity of TMEM68/DIESL at the endoplasmic reticulum, thereby restricting accumulation of triacylglycerol. The alternative triglyceride biosynthesis pathway mediates formation of triacylglycerol from diacylglycerol and membrane phospholipids. Acts as a protein disulfide isomerase by catalyzing formation or reduction of disulfide bonds. Specifically mediates formation of disulfide bonds of transmembrane proteins at the endoplasmic reticulum membrane. Involved in endoplasmic reticulum-associated degradation (ERAD) via its protein disulfide isomerase activity by acting on folding-defective polypeptides at the endoplasmic reticulum membrane. Acts as a negative regulator of platelet aggregation following secretion in the extracellular space. Acts as a regulator of endoplasmic reticulum-mitochondria contact sites via its ability to regulate redox signals. Regulates endoplasmic reticulum-mitochondria Ca(2+) flux. In Bos taurus (Bovine), this protein is Thioredoxin-related transmembrane protein 1 (TMX1).